The sequence spans 198 residues: uncharacterized protein (198 aa).

Positions 166-198 (GYEPDEKARKKRERVKRSEVEDQLKINVKPTRR) are disordered.

This is an uncharacterized protein from Coxiella burnetii (strain RSA 493 / Nine Mile phase I).